Consider the following 299-residue polypeptide: 4-diphosphocytidyl-2-C-methyl-D-erythritol kinase (299 aa).

Lysine 18 is a catalytic residue. 104-114 (PIASGIGGGSS) contacts ATP. The active site involves aspartate 146.

The protein belongs to the GHMP kinase family. IspE subfamily.

It carries out the reaction 4-CDP-2-C-methyl-D-erythritol + ATP = 4-CDP-2-C-methyl-D-erythritol 2-phosphate + ADP + H(+). It participates in isoprenoid biosynthesis; isopentenyl diphosphate biosynthesis via DXP pathway; isopentenyl diphosphate from 1-deoxy-D-xylulose 5-phosphate: step 3/6. Catalyzes the phosphorylation of the position 2 hydroxy group of 4-diphosphocytidyl-2C-methyl-D-erythritol. This is 4-diphosphocytidyl-2-C-methyl-D-erythritol kinase from Brucella melitensis biotype 1 (strain ATCC 23456 / CCUG 17765 / NCTC 10094 / 16M).